The primary structure comprises 81 residues: Cytochrome b559 subunit alpha (81 aa).

A helical transmembrane segment spans residues 21–35; that stretch reads VIHSITIPALFIAGW. Residue His23 participates in heme binding.

Belongs to the PsbE/PsbF family. As to quaternary structure, heterodimer of an alpha subunit and a beta subunit. PSII is composed of 1 copy each of membrane proteins PsbA, PsbB, PsbC, PsbD, PsbE, PsbF, PsbH, PsbI, PsbJ, PsbK, PsbL, PsbM, PsbT, PsbX, PsbY, PsbZ, Psb30/Ycf12, at least 3 peripheral proteins of the oxygen-evolving complex and a large number of cofactors. It forms dimeric complexes. It depends on heme b as a cofactor.

Its subcellular location is the plastid. It localises to the chloroplast thylakoid membrane. Functionally, this b-type cytochrome is tightly associated with the reaction center of photosystem II (PSII). PSII is a light-driven water:plastoquinone oxidoreductase that uses light energy to abstract electrons from H(2)O, generating O(2) and a proton gradient subsequently used for ATP formation. It consists of a core antenna complex that captures photons, and an electron transfer chain that converts photonic excitation into a charge separation. The sequence is that of Cytochrome b559 subunit alpha from Tetradesmus obliquus (Green alga).